We begin with the raw amino-acid sequence, 438 residues long: 3-phosphoshikimate 1-carboxyvinyltransferase (438 aa).

Residues lysine 26, serine 27, and arginine 31 each coordinate 3-phosphoshikimate. Lysine 26 contacts phosphoenolpyruvate. 2 residues coordinate phosphoenolpyruvate: glycine 99 and arginine 127. 3-phosphoshikimate-binding residues include serine 172, glutamine 174, aspartate 320, and lysine 347. Glutamine 174 is a binding site for phosphoenolpyruvate. The active-site Proton acceptor is aspartate 320. Phosphoenolpyruvate is bound by residues arginine 351 and arginine 392.

Belongs to the EPSP synthase family. In terms of assembly, monomer.

The protein localises to the cytoplasm. The catalysed reaction is 3-phosphoshikimate + phosphoenolpyruvate = 5-O-(1-carboxyvinyl)-3-phosphoshikimate + phosphate. The protein operates within metabolic intermediate biosynthesis; chorismate biosynthesis; chorismate from D-erythrose 4-phosphate and phosphoenolpyruvate: step 6/7. Its function is as follows. Catalyzes the transfer of the enolpyruvyl moiety of phosphoenolpyruvate (PEP) to the 5-hydroxyl of shikimate-3-phosphate (S3P) to produce enolpyruvyl shikimate-3-phosphate and inorganic phosphate. The chain is 3-phosphoshikimate 1-carboxyvinyltransferase from Xanthomonas campestris pv. campestris (strain 8004).